We begin with the raw amino-acid sequence, 124 residues long: UPF0299 membrane protein VP1300 (124 aa).

A run of 4 helical transmembrane segments spans residues 9–29 (LIQL…GITI), 35–55 (VSVP…TLGL), 72–92 (MILL…MLLA), and 95–115 (LPII…LAWL).

The protein belongs to the UPF0299 family.

The protein resides in the cell inner membrane. The sequence is that of UPF0299 membrane protein VP1300 from Vibrio parahaemolyticus serotype O3:K6 (strain RIMD 2210633).